The chain runs to 275 residues: Polyamine aminopropyltransferase (275 aa).

The PABS domain maps to 2–235 (DLWLREGQIE…GFWSFTIGSK (234 aa)). Position 31 (Q31) interacts with S-methyl-5'-thioadenosine. H62 and D86 together coordinate spermidine. S-methyl-5'-thioadenosine is bound by residues E106 and 137–138 (DG). D155 acts as the Proton acceptor in catalysis. Position 155–158 (155–158 (DSTD)) interacts with spermidine.

This sequence belongs to the spermidine/spermine synthase family. In terms of assembly, homodimer or homotetramer.

The protein localises to the cytoplasm. It carries out the reaction S-adenosyl 3-(methylsulfanyl)propylamine + putrescine = S-methyl-5'-thioadenosine + spermidine + H(+). It participates in amine and polyamine biosynthesis; spermidine biosynthesis; spermidine from putrescine: step 1/1. Its function is as follows. Catalyzes the irreversible transfer of a propylamine group from the amino donor S-adenosylmethioninamine (decarboxy-AdoMet) to putrescine (1,4-diaminobutane) to yield spermidine. The sequence is that of Polyamine aminopropyltransferase from Clostridium kluyveri (strain NBRC 12016).